Consider the following 334-residue polypeptide: Anthranilate phosphoribosyltransferase (334 aa).

5-phospho-alpha-D-ribose 1-diphosphate contacts are provided by residues Gly-79, 82–83 (GD), Ser-87, 89–92 (NIST), 107–115 (KHGNRSISS), and Ser-119. Gly-79 contacts anthranilate. Residue Ser-91 participates in Mg(2+) binding. Position 110 (Asn-110) interacts with anthranilate. Arg-165 contributes to the anthranilate binding site. Positions 224 and 225 each coordinate Mg(2+).

This sequence belongs to the anthranilate phosphoribosyltransferase family. In terms of assembly, homodimer. Requires Mg(2+) as cofactor.

It catalyses the reaction N-(5-phospho-beta-D-ribosyl)anthranilate + diphosphate = 5-phospho-alpha-D-ribose 1-diphosphate + anthranilate. It functions in the pathway amino-acid biosynthesis; L-tryptophan biosynthesis; L-tryptophan from chorismate: step 2/5. Its function is as follows. Catalyzes the transfer of the phosphoribosyl group of 5-phosphorylribose-1-pyrophosphate (PRPP) to anthranilate to yield N-(5'-phosphoribosyl)-anthranilate (PRA). The protein is Anthranilate phosphoribosyltransferase of Streptococcus pneumoniae (strain 70585).